The sequence spans 336 residues: Isethionate-binding periplasmic protein DctP (336 aa).

Positions Met-1–Ala-23 are cleaved as a signal peptide.

Belongs to the bacterial solute-binding protein 7 family. The complex comprises the periplasmic solute receptor protein DctP, and the fused transmembrane protein DctMQ.

It is found in the periplasm. The catalysed reaction is 2-hydroxyethane-1-sulfonate(out) + Na(+)(out) = 2-hydroxyethane-1-sulfonate(in) + Na(+)(in). It participates in organosulfur degradation; alkanesulfonate degradation. In terms of biological role, part of the tripartite ATP-independent periplasmic (TRAP) transport system DctPQM involved in the uptake of isethionate (2-hydroxyethanesulfonate), which is then catabolized by enzymes encoded by adjacent genes in the locus. The DctP subunit is the solute-binding protein. Thereby is involved in an anaerobic respiration pathway that converts the sulfonate isethionate to ammonia, acetate and sulfide. This chain is Isethionate-binding periplasmic protein DctP, found in Oleidesulfovibrio alaskensis (strain ATCC BAA-1058 / DSM 17464 / G20) (Desulfovibrio alaskensis).